The chain runs to 128 residues: Cytochrome c-type biogenesis protein CcmE (128 aa).

Residues 1-8 are Cytoplasmic-facing; it reads MQKIVRNR. A helical; Signal-anchor for type II membrane protein membrane pass occupies residues 9-29; sequence LIKIILCFCSTCLGISIILYN. The Periplasmic segment spans residues 30–128; it reads LEKNIIFFFP…KHDENYRPPS (99 aa). Positions 120 and 124 each coordinate heme.

It belongs to the CcmE/CycJ family.

Its subcellular location is the cell inner membrane. Its function is as follows. Heme chaperone required for the biogenesis of c-type cytochromes. Transiently binds heme delivered by CcmC and transfers the heme to apo-cytochromes in a process facilitated by CcmF and CcmH. This chain is Cytochrome c-type biogenesis protein CcmE, found in Rickettsia typhi (strain ATCC VR-144 / Wilmington).